We begin with the raw amino-acid sequence, 443 residues long: Thymidine phosphorylase (443 aa).

This sequence belongs to the thymidine/pyrimidine-nucleoside phosphorylase family. In terms of assembly, homodimer.

The enzyme catalyses thymidine + phosphate = 2-deoxy-alpha-D-ribose 1-phosphate + thymine. It participates in pyrimidine metabolism; dTMP biosynthesis via salvage pathway; dTMP from thymine: step 1/2. Functionally, the enzymes which catalyze the reversible phosphorolysis of pyrimidine nucleosides are involved in the degradation of these compounds and in their utilization as carbon and energy sources, or in the rescue of pyrimidine bases for nucleotide synthesis. The chain is Thymidine phosphorylase from Shewanella pealeana (strain ATCC 700345 / ANG-SQ1).